Consider the following 195-residue polypeptide: Large ribosomal subunit protein uL18 (195 aa).

The protein belongs to the universal ribosomal protein uL18 family. Part of the 50S ribosomal subunit. Contacts the 5S and 23S rRNAs.

In terms of biological role, this is one of the proteins that bind and probably mediate the attachment of the 5S RNA into the large ribosomal subunit, where it forms part of the central protuberance. The polypeptide is Large ribosomal subunit protein uL18 (Metallosphaera sedula (strain ATCC 51363 / DSM 5348 / JCM 9185 / NBRC 15509 / TH2)).